A 223-amino-acid polypeptide reads, in one-letter code: Small ribosomal subunit protein uS3 (223 aa).

Positions 39-117 constitute a KH type-2 domain; it reads IREHLRKKPS…RPELNAKLVA (79 aa).

The protein belongs to the universal ribosomal protein uS3 family. Part of the 30S ribosomal subunit. Forms a tight complex with proteins S10 and S14.

Functionally, binds the lower part of the 30S subunit head. Binds mRNA in the 70S ribosome, positioning it for translation. The polypeptide is Small ribosomal subunit protein uS3 (Chlamydia felis (strain Fe/C-56) (Chlamydophila felis)).